A 197-amino-acid polypeptide reads, in one-letter code: HTH-type transcriptional regulator BetI (197 aa).

Residues 8–68 form the HTH tetR-type domain; sequence PIRRQQLIQA…ATMRHLMNAL (61 aa). The H-T-H motif DNA-binding region spans 31–50; it reads SIALIARLAGVSNGIISHYF.

Its pathway is amine and polyamine biosynthesis; betaine biosynthesis via choline pathway [regulation]. Functionally, repressor involved in the biosynthesis of the osmoprotectant glycine betaine. It represses transcription of the choline transporter BetT and the genes of BetAB involved in the synthesis of glycine betaine. The polypeptide is HTH-type transcriptional regulator BetI (Pseudomonas savastanoi pv. phaseolicola (strain 1448A / Race 6) (Pseudomonas syringae pv. phaseolicola (strain 1448A / Race 6))).